The primary structure comprises 312 residues: Malate dehydrogenase (312 aa).

NAD(+) contacts are provided by residues 12-17 and aspartate 36; that span reads GAGFTG. Residues arginine 87 and arginine 93 each coordinate substrate. Residues asparagine 100 and 123–125 each bind NAD(+); that span reads LTN. Asparagine 125 is a substrate binding site. Residue serine 149 is modified to Phosphoserine. Residue arginine 156 participates in substrate binding. Histidine 180 (proton acceptor) is an active-site residue.

Belongs to the LDH/MDH superfamily. MDH type 3 family.

It catalyses the reaction (S)-malate + NAD(+) = oxaloacetate + NADH + H(+). Catalyzes the reversible oxidation of malate to oxaloacetate. This chain is Malate dehydrogenase, found in Bacillus cereus (strain ATCC 14579 / DSM 31 / CCUG 7414 / JCM 2152 / NBRC 15305 / NCIMB 9373 / NCTC 2599 / NRRL B-3711).